The sequence spans 286 residues: Polyamine aminopropyltransferase (286 aa).

In terms of domain architecture, PABS spans 5–238 (TMWHETLHDQ…GIMTFAWATD (234 aa)). Gln33 contacts S-methyl-5'-thioadenosine. Residues His64 and Asp88 each contribute to the spermidine site. Residues Glu108 and 140-141 (DG) contribute to the S-methyl-5'-thioadenosine site. Asp158 serves as the catalytic Proton acceptor. A spermidine-binding site is contributed by 158–161 (DCTD). S-methyl-5'-thioadenosine is bound at residue Pro165.

The protein belongs to the spermidine/spermine synthase family. As to quaternary structure, homodimer or homotetramer.

Its subcellular location is the cytoplasm. It carries out the reaction S-adenosyl 3-(methylsulfanyl)propylamine + putrescine = S-methyl-5'-thioadenosine + spermidine + H(+). It participates in amine and polyamine biosynthesis; spermidine biosynthesis; spermidine from putrescine: step 1/1. Catalyzes the irreversible transfer of a propylamine group from the amino donor S-adenosylmethioninamine (decarboxy-AdoMet) to putrescine (1,4-diaminobutane) to yield spermidine. This Salmonella arizonae (strain ATCC BAA-731 / CDC346-86 / RSK2980) protein is Polyamine aminopropyltransferase.